Consider the following 471-residue polypeptide: MAAAQPKYPAGATARRLARGCWSALWDYETPKVIVVRNRRLGVLYRAVQLLILLYFVWYVFIVQKSYQESETGPESSIITKVKGITTSEHKVWDVEEYVKPPEGGSVFSIITRVEATHSQTQGTCPESIRVHNATCLSDADCVAGELDMLGNGLRTGRCVPYYQGPSKTCEVFGWCPVEDGASVSQFLGTMAPNFTILIKNSIHYPKFHFSKGNIADRTDGYLKRCTFHEASDLYCPIFKLGFIVEKAGESFTELAHKGGVIGVIINWDCDLDLPASECNPKYSFRRLDPKHVPASSGYNFRFAKYYKINGTTTRTLIKAYGIRIDVIVHGQAGKFSLIPTIINLATALTSVGVGSFLCDWILLTFMNKNKVYSHKKFDKVCTPSHPSGSWPVTLARVLGQAPPEPGHRSEDQHPSPPSGQEGQQGAECGPAFPPLRPCPISAPSEQMVDTPASEPAQASTPTDPKGLAQL.

Residues 1 to 42 lie on the Cytoplasmic side of the membrane; that stretch reads MAAAQPKYPAGATARRLARGCWSALWDYETPKVIVVRNRRLG. 6 disulfide bridges follow: C21-C439, C125-C176, C136-C159, C142-C170, C226-C236, and C270-C279. The helical transmembrane segment at 43-63 threads the bilayer; it reads VLYRAVQLLILLYFVWYVFIV. The Extracellular portion of the chain corresponds to 64-337; that stretch reads QKSYQESETG…IVHGQAGKFS (274 aa). ATP contacts are provided by K81 and K83. N-linked (GlcNAc...) asparagine glycosylation occurs at N133. N-linked (GlcNAc...) asparagine glycosylation is present at N194. T196 is an ATP binding site. 3 residues coordinate ATP: S296, N300, and R302. N-linked (GlcNAc...) asparagine glycosylation is present at N310. K319 provides a ligand contact to ATP. The tract at residues 320-333 is pore-forming motif; the sequence is AYGIRIDVIVHGQA. Residues 338–358 form a helical membrane-spanning segment; it reads LIPTIINLATALTSVGVGSFL. The Cytoplasmic segment spans residues 359–471; the sequence is CDWILLTFMN…PTDPKGLAQL (113 aa). Residues 400–471 are disordered; the sequence is GQAPPEPGHR…PTDPKGLAQL (72 aa).

The protein belongs to the P2X receptor family. As to quaternary structure, homotrimer and heterotrimer; functional P2XRs are organized as homomeric and heteromeric trimers. Homotrimer. Forms heterotrimer with P2RX1. Forms heterotrimer with P2RX6. Forms heterotrimer with P2RX3. As to expression, expressed in both the central and peripheral nervous system, as well as in the pituitary gland.

The protein localises to the cell membrane. It carries out the reaction Ca(2+)(in) = Ca(2+)(out). The enzyme catalyses K(+)(in) = K(+)(out). The catalysed reaction is Na(+)(in) = Na(+)(out). With respect to regulation, fast activation by external ATP. Exhibits slow desensitization during prolonged ATP activation. Not sensitive to the ATP agonist:alpha/beta-methylene-ATP. Its function is as follows. ATP-gated nonselective transmembrane cation channel permeable to potassium, sodium and calcium. Activation by extracellular ATP induces a variety of cellular responses, such as excitatory postsynaptic responses in sensory neurons, neuromuscular junctions (NMJ) formation, hearing, perception of taste and peristalsis. In the inner ear, regulates sound transduction and auditory neurotransmission, outer hair cell electromotility, inner ear gap junctions, and K(+) recycling. Mediates synaptic transmission between neurons and from neurons to smooth muscle. The chain is P2X purinoceptor 2 from Homo sapiens (Human).